The sequence spans 282 residues: 4-hydroxy-3-methylbut-2-enyl diphosphate reductase (282 aa).

C14 contacts [4Fe-4S] cluster. The (2E)-4-hydroxy-3-methylbut-2-enyl diphosphate site is built by H43 and H78. The dimethylallyl diphosphate site is built by H43 and H78. H43 and H78 together coordinate isopentenyl diphosphate. C100 lines the [4Fe-4S] cluster pocket. H128 serves as a coordination point for (2E)-4-hydroxy-3-methylbut-2-enyl diphosphate. A dimethylallyl diphosphate-binding site is contributed by H128. H128 contacts isopentenyl diphosphate. E130 (proton donor) is an active-site residue. Residue T164 coordinates (2E)-4-hydroxy-3-methylbut-2-enyl diphosphate. A [4Fe-4S] cluster-binding site is contributed by C192. (2E)-4-hydroxy-3-methylbut-2-enyl diphosphate-binding residues include S220, S221, N222, and S266. The dimethylallyl diphosphate site is built by S220, S221, N222, and S266. Isopentenyl diphosphate is bound by residues S220, S221, N222, and S266.

Belongs to the IspH family. Requires [4Fe-4S] cluster as cofactor.

The enzyme catalyses isopentenyl diphosphate + 2 oxidized [2Fe-2S]-[ferredoxin] + H2O = (2E)-4-hydroxy-3-methylbut-2-enyl diphosphate + 2 reduced [2Fe-2S]-[ferredoxin] + 2 H(+). It carries out the reaction dimethylallyl diphosphate + 2 oxidized [2Fe-2S]-[ferredoxin] + H2O = (2E)-4-hydroxy-3-methylbut-2-enyl diphosphate + 2 reduced [2Fe-2S]-[ferredoxin] + 2 H(+). Its pathway is isoprenoid biosynthesis; dimethylallyl diphosphate biosynthesis; dimethylallyl diphosphate from (2E)-4-hydroxy-3-methylbutenyl diphosphate: step 1/1. It functions in the pathway isoprenoid biosynthesis; isopentenyl diphosphate biosynthesis via DXP pathway; isopentenyl diphosphate from 1-deoxy-D-xylulose 5-phosphate: step 6/6. Catalyzes the conversion of 1-hydroxy-2-methyl-2-(E)-butenyl 4-diphosphate (HMBPP) into a mixture of isopentenyl diphosphate (IPP) and dimethylallyl diphosphate (DMAPP). Acts in the terminal step of the DOXP/MEP pathway for isoprenoid precursor biosynthesis. The sequence is that of 4-hydroxy-3-methylbut-2-enyl diphosphate reductase from Clostridium perfringens (strain 13 / Type A).